We begin with the raw amino-acid sequence, 526 residues long: tRNA modification GTPase MSS1, mitochondrial (526 aa).

A mitochondrion-targeting transit peptide spans methionine 1 to arginine 19. Residues glycine 274–glutamate 444 enclose the TrmE-type G domain. Residues glycine 281–serine 288, aspartate 328–isoleucine 332, and asparagine 394–aspartate 397 each bind GTP.

The protein belongs to the TRAFAC class TrmE-Era-EngA-EngB-Septin-like GTPase superfamily. TrmE GTPase family. As to quaternary structure, forms a heterodimer with MTO1.

The protein localises to the mitochondrion. In terms of biological role, GTPase involved in the 5-carboxymethylaminomethyl modification (mnm(5)s(2)U34) of the wobble uridine base in mitochondrial tRNAs. Involved in the expression of cytochrome c oxidase subunit 1 (COX1). Works in association with the small subunit of mitoribosomes. The sequence is that of tRNA modification GTPase MSS1, mitochondrial (MSS1) from Saccharomyces cerevisiae (strain ATCC 204508 / S288c) (Baker's yeast).